The chain runs to 570 residues: MKLCPWYIALILLPVCLQSQKLPTRDEELFQMQIRDKALFHDSSVIPDGAEISGYLFRDNPKRYFFVVEEDNTPLSVIVTPCDAPLEWKLTLQELPEEASGEGSGEPEPLEEQKQQIVNEEGTELFSYKGNDVEYFVSSSSPSGLYQLELISTEKDTHFKVYATTTPESDQPYPELPYDPRVDVTSLGRTTVTLAWKPTPTSSVMKQPIQYCVVINKEHNFKSICAVEAKMNADDAFMMVPKPGIDFNPFDFAHFGFQSDNNAGKDRNFMPKASSSKLLRQITTKPKVDIQKVCIGNKNIFTVSDLKPDTQYYFDVFAVNAATNMSTAYVGTFARTKEEAKQKTVELKDGKVTDVFIKRKGTKFLRFSPVSSHQKVTFSVHSCLDAIQIQVRRDGKLLLSHSVEGVRQFQLRGKPKAKYLIRLKGSKKGASMLKILATSKFNKQPFPSLPEDTRIKAFDKLRTCSSVTVAWLGTQERNKFCVYKKEVDDDYTEEHKKREQNQCLGPDTRKKTEKVLCKYFHSQNIHKAVTTETIKGLQPGKSYMLDVYVMGHGGHSVKYQSKIVKTRKFC.

Residues 1-19 (MKLCPWYIALILLPVCLQS) form the signal peptide. 2 Fibronectin type-III domains span residues 261 to 333 (NNAG…VGTF) and 447 to 566 (PSLP…IVKT). An N-linked (GlcNAc...) asparagine glycan is attached at Asn-324.

Its subcellular location is the secreted. Functionally, secretory protein that plays a role in various cellular processes. Acts as a chemorepellent acting on gonadotropin-releasing hormone (GnRH) expressing neurons regulating their migration to the hypothalamus. Also promotes neuron migration, growth and survival as well as neurite outgrowth and is involved in the development of the olfactory system. May also act through the regulation of growth factors activity and downstream signaling. Also regulates extracellular matrix assembly and cell adhesiveness. Promotes endothelial cell survival, vessel formation and plays an important role in the process of revascularization through NOS3-dependent mechanisms. This chain is Protein NDNF (ndnf), found in Xenopus tropicalis (Western clawed frog).